Here is a 289-residue protein sequence, read N- to C-terminus: Thioredoxin-like protein 1 (289 aa).

A Thioredoxin domain is found at 2-109 (VGVKPVGSDP…EEKIKQHLEN (108 aa)). Cys34 and Cys37 form a disulfide bridge. Residue Ser113 is modified to Phosphoserine. In terms of domain architecture, PITH spans 115-285 (EDTDIPKGYM…NDFKRVVGKK (171 aa)).

Component of the 19S regulatory cap of the 26S proteasome. Interacts with PSMD14/RPN11. Interacts with, and reduces EEF1A1.

Its subcellular location is the cytoplasm. It is found in the nucleus. Active thioredoxin with a redox potential of about -250 mV. The chain is Thioredoxin-like protein 1 (Txnl1) from Rattus norvegicus (Rat).